A 181-amino-acid chain; its full sequence is TATA-box-binding protein (181 aa).

Repeat copies occupy residues 7-83 (IVNV…MEYL) and 98-173 (VQNM…KNTV).

Belongs to the TBP family.

In terms of biological role, general factor that plays a role in the activation of archaeal genes transcribed by RNA polymerase. Binds specifically to the TATA box promoter element which lies close to the position of transcription initiation. This Methanococcus aeolicus (strain ATCC BAA-1280 / DSM 17508 / OCM 812 / Nankai-3) protein is TATA-box-binding protein.